A 1327-amino-acid chain; its full sequence is Putative ATP-dependent RNA helicase ucp12 (1327 aa).

Disordered regions lie at residues 1-58 and 201-222; these read MGSK…KQLV and QAAR…NEKV. Positions 18 to 41 are enriched in basic and acidic residues; it reads SKNKEKNIKGKKKNSLDPIEKNKQ. Polar residues predominate over residues 42-58; that stretch reads ETAGLQTTSRPTAKQLV. In terms of domain architecture, UBA spans 276-315; that stretch reads EPDTSIVNDLISLGFRDIHAKEACQYCVSLEDALEWLIIH. In terms of domain architecture, RWD spans 405-504; that stretch reads DDVSALQSIL…NHLQENIEDF (100 aa). Residues 587 to 756 form the Helicase ATP-binding domain; that stretch reads MDAIQHSQVV…FGNAGHLHIH (170 aa). 600–607 contributes to the ATP binding site; the sequence is GETGSGKS. Positions 703–706 match the DEAH box motif; sequence DEVH. A Helicase C-terminal domain is found at 797–968; the sequence is LISRLVSSID…QVCLNVVPLV (172 aa).

Belongs to the DEAD box helicase family. DEAH subfamily.

It localises to the cytoplasm. It catalyses the reaction ATP + H2O = ADP + phosphate + H(+). In terms of biological role, probable ATP-binding RNA helicase. This Schizosaccharomyces pombe (strain 972 / ATCC 24843) (Fission yeast) protein is Putative ATP-dependent RNA helicase ucp12 (ucp12).